The primary structure comprises 190 residues: Holliday junction branch migration complex subunit RuvA (190 aa).

Positions M1–I65 are domain I. The tract at residues S66–H143 is domain II. The segment at S144–E147 is flexible linker. Positions E147–I190 are domain III.

The protein belongs to the RuvA family. In terms of assembly, homotetramer. Forms an RuvA(8)-RuvB(12)-Holliday junction (HJ) complex. HJ DNA is sandwiched between 2 RuvA tetramers; dsDNA enters through RuvA and exits via RuvB. An RuvB hexamer assembles on each DNA strand where it exits the tetramer. Each RuvB hexamer is contacted by two RuvA subunits (via domain III) on 2 adjacent RuvB subunits; this complex drives branch migration. In the full resolvosome a probable DNA-RuvA(4)-RuvB(12)-RuvC(2) complex forms which resolves the HJ.

The protein resides in the cytoplasm. Its function is as follows. The RuvA-RuvB-RuvC complex processes Holliday junction (HJ) DNA during genetic recombination and DNA repair, while the RuvA-RuvB complex plays an important role in the rescue of blocked DNA replication forks via replication fork reversal (RFR). RuvA specifically binds to HJ cruciform DNA, conferring on it an open structure. The RuvB hexamer acts as an ATP-dependent pump, pulling dsDNA into and through the RuvAB complex. HJ branch migration allows RuvC to scan DNA until it finds its consensus sequence, where it cleaves and resolves the cruciform DNA. The protein is Holliday junction branch migration complex subunit RuvA of Wolbachia pipientis subsp. Culex pipiens (strain wPip).